Here is a 377-residue protein sequence, read N- to C-terminus: MAGAKSEVIYLGDKDLNRNRHRDRDQSPEREIKILFFDLTHYNRTTQFLLCCGGVFALYLVYGYMQELIFTLEGFRPYGWYLTLVQFAYYTAFGYIERSVERTTVPRCIPLRTYALLAFLTLGTMGLSNSSVGYLNYPTQVIFKCCKLIPVLIGSVLIQGKKHGPMDFFAATAMCLGLILFTLADSQVQPDFNRFGVFLISLALLCDAAIGNVQEKAMREHRAPNNEVVIYSYGIGFVYLAVIMLLSGHLVQGVAFCARYPMETYGYAFLFSLTGYLGIQIVLTLVRTCGAPLAATVTTARKAVTIALSFVFFSKPFTIQYLWSGLIVVFGIYLNVYSKRSKLTFADLGRMASTVYRWVLRLPPAKDGGSRTSLLEV.

10 helical membrane passes run 50–70 (LCCG…ELIF), 77–97 (PYGW…GYIE), 115–135 (ALLA…VGYL), 138–158 (PTQV…SVLI), 164–184 (GPMD…FTLA), 195–215 (FGVF…NVQE), 228–248 (VVIY…LLSG), 266–286 (GYAF…LTLV), 293–313 (LAAT…FVFF), and 317–337 (FTIQ…LNVY).

The protein belongs to the nucleotide-sugar transporter family. SLC35B subfamily.

The protein localises to the golgi apparatus membrane. In terms of biological role, mediates the transport of adenosine 3'-phospho 5'-phosphosulfate (PAPS), from cytosol into Golgi. PAPS is a universal sulfuryl donor for sulfation events that take place in the Golgi. Essential for viability. Involved in glycosaminoglycan synthesis and the subsequent signaling. May be involved in hh and dpp signaling by controlling the sulfation of heparan sulfate (HS). The protein is Adenosine 3'-phospho 5'-phosphosulfate transporter 2 of Anopheles gambiae (African malaria mosquito).